We begin with the raw amino-acid sequence, 325 residues long: MATVRKAFPQRLVGLASLRAASTSSMGTLPKRVKIVEVGPRDGLQNEKSIVPTPVKIKLIDMLSEAGLPVIEATSFVSPKWVPQMADHSDVLKGIQKFPGINYPVLTPNMKGFEEAVAAGAKEVSIFGAASELFTRKNVNCSIEESFQRFDGVMQAARAASISVRGYVSCALGCPYEGKVSPAKVAEVAKKLYSMGCYEISLGDTIGVGTPGLMKDMLTAVLHEVPVAALAVHCHDTYGQALANTLVALQMGVSVVDSSVAGLGGCPYAKGASGNLATEDLVYMLTGLGIHTGVNLQKLLEAGDFICQALNRKTSSKVAQATCKL.

The transit peptide at 1–27 (MATVRKAFPQRLVGLASLRAASTSSMG) directs the protein to the mitochondrion. Positions 33 to 300 (VKIVEVGPRD…HTGVNLQKLL (268 aa)) constitute a Pyruvate carboxyltransferase domain. Arg41 provides a ligand contact to substrate. Asp42 is a binding site for a divalent metal cation. Lys48 bears the N6-acetyllysine; alternate mark. Residue Lys48 is modified to N6-succinyllysine; alternate. N6-acetyllysine is present on Lys111. N6-acetyllysine; alternate occurs at positions 137 and 179. Residues Lys137 and Lys179 each carry the N6-succinyllysine; alternate modification. 2 residues coordinate a divalent metal cation: His233 and His235. Cys266 is a catalytic residue. Position 275 (Asn275) interacts with a divalent metal cation. The short motif at 323–325 (CKL) is the Microbody targeting signal element. The residue at position 324 (Lys324) is an N6-acetyllysine.

The protein belongs to the HMG-CoA lyase family. Homodimer; disulfide-linked. Can also form homotetramers. In terms of tissue distribution, in suckling rat, highest levels in liver and in intestine. Lower levels in heart, kidney and cerebellum. Weak expression in brain cortex, medulla and midbrain. Levels decrease slightly during weaning.

The protein localises to the mitochondrion matrix. It is found in the peroxisome. The catalysed reaction is (3S)-3-hydroxy-3-methylglutaryl-CoA = acetoacetate + acetyl-CoA. It functions in the pathway metabolic intermediate metabolism; (S)-3-hydroxy-3-methylglutaryl-CoA degradation; acetoacetate from (S)-3-hydroxy-3-methylglutaryl-CoA: step 1/1. Functionally, mitochondrial 3-hydroxy-3-methylglutaryl-CoA lyase that catalyzes a cation-dependent cleavage of (S)-3-hydroxy-3-methylglutaryl-CoA into acetyl-CoA and acetoacetate, a key step in ketogenesis. Terminal step in leucine catabolism. Ketone bodies (beta-hydroxybutyrate, acetoacetate and acetone) are essential as an alternative source of energy to glucose, as lipid precursors and as regulators of metabolism. This is Hydroxymethylglutaryl-CoA lyase, mitochondrial (Hmgcl) from Rattus norvegicus (Rat).